Reading from the N-terminus, the 270-residue chain is Hematopoietically-expressed homeobox protein HHEX (270 aa).

The tract at residues 1 to 137 (MQYPHPGPAA…PFLQRPLHKR (137 aa)) is interaction with SOX13. The residue at position 53 (Ser-53) is a Phosphoserine. Residues 137–196 (RKGGQVRFSNDQTIELEKKFETQKYLSPPERKRLAKMLQLSERQVKTWFQNRRAKWRRLK) constitute a DNA-binding region (homeobox). Residues 137–270 (RKGGQVRFSN…EGDKSYFNAG (134 aa)) form a required for WNT signaling induction region. Residues 194-270 (RLKQENPQSN…EGDKSYFNAG (77 aa)) form a disordered region. Polar residues predominate over residues 222–241 (PSEQNKGASLDSSQCSPSPA). Residues 244 to 260 (EDLESEISEDSDQEVDI) show a composition bias toward acidic residues.

As to quaternary structure, interacts with CD81; the interaction prevents nuclear translocation of HHEX. Interacts (via N-terminus) with SOX13; abolishes the SOX13-mediated inhibition of WNT-mediated transcriptional activity via competitive inhibition of the SOX13-TCF7 complex. Interacts with EIF4E; the interaction inhibits EIF4E-mediated mRNA nuclear export. Liver and promyelocytic leukemia cell line HL-60.

The protein localises to the nucleus. Its subcellular location is the nuclear body. The protein resides in the cytoplasm. In terms of biological role, recognizes the DNA sequence 5'-ATTAA-3'. Transcriptional repressor. Activator of WNT-mediated transcription in conjunction with CTNNB1. Establishes anterior identity at two levels; acts early to enhance canonical WNT-signaling by repressing expression of TLE4, and acts later to inhibit NODAL-signaling by directly targeting NODAL. Inhibits EIF4E-mediated mRNA nuclear export. May play a role in hematopoietic differentiation. The protein is Hematopoietically-expressed homeobox protein HHEX (HHEX) of Homo sapiens (Human).